Reading from the N-terminus, the 466-residue chain is RuvB-like helicase 2 (466 aa).

74–81 (GPPSTGKT) lines the ATP pocket.

The protein belongs to the RuvB family. As to quaternary structure, may form heterododecamers with RVB1. Component of the SWR1 chromatin remodeling complex, the INO80 chromatin remodeling complex, and of the R2TP complex.

Its subcellular location is the nucleus. The catalysed reaction is ATP + H2O = ADP + phosphate + H(+). In terms of biological role, DNA helicase which participates in several chromatin remodeling complexes, including the SWR1 and the INO80 complexes. The SWR1 complex mediates the ATP-dependent exchange of histone H2A for the H2A variant HZT1 leading to transcriptional regulation of selected genes by chromatin remodeling. The INO80 complex remodels chromatin by shifting nucleosomes and is involved in DNA repair. Also involved in pre-rRNA processing. This Yarrowia lipolytica (strain CLIB 122 / E 150) (Yeast) protein is RuvB-like helicase 2 (RVB2).